The sequence spans 348 residues: Rhodopsin (348 aa).

M1 carries the post-translational modification N-acetylmethionine. Residues 1-36 lie on the Extracellular side of the membrane; that stretch reads MNGTEGPNFYVPFSNATGVVRSPFEYPQYYLAEPWQ. N-linked (GlcNAc...) asparagine glycans are attached at residues N2 and N15. Residues 37 to 61 traverse the membrane as a helical segment; the sequence is FSMLAAYMFMLIVLGFPINFLTLYV. At 62–73 the chain is on the cytoplasmic side; that stretch reads TVQHKKLRTPLN. The chain crosses the membrane as a helical span at residues 74 to 96; the sequence is YILLNLAVADLFMVFGGFTTTLY. Topologically, residues 97 to 110 are extracellular; that stretch reads TSLHGYFVFGPTGC. C110 and C187 form a disulfide bridge. The chain crosses the membrane as a helical span at residues 111 to 133; that stretch reads NLEGFFATLGGEIALWSLVVLAI. A 'Ionic lock' involved in activated form stabilization motif is present at residues 134–136; it reads ERY. Topologically, residues 134-152 are cytoplasmic; it reads ERYVVVCKPMSNFRFGENH. The chain crosses the membrane as a helical span at residues 153–173; it reads AIMGLVFTWIMALACAAPPLV. Residues 174–202 are Extracellular-facing; sequence GWSRYIPEGMQCSCGIDYYTLKPEVNNES. Position 201 (E201) interacts with Zn(2+). Residues 203–224 form a helical membrane-spanning segment; it reads FVIYMFVVHFFIPLFVIFFCYG. Residues 225–252 are Cytoplasmic-facing; sequence QLVFTVKEAAAQQQESATTQKAEKEVTR. The helical transmembrane segment at 253–274 threads the bilayer; that stretch reads MVIIMVIAFLICWLPYAGVAFY. The Extracellular portion of the chain corresponds to 275 to 286; that stretch reads IFTHQGSNFGPI. Q279 provides a ligand contact to Zn(2+). A helical transmembrane segment spans residues 287-308; sequence FMTLPAFFAKTASIYNPVIYIM. K296 is modified (N6-(retinylidene)lysine). The Cytoplasmic segment spans residues 309–348; it reads MNKQFRTCMITTLCCGKNPLGDDEASTTASKTETSQVAPA. 2 S-palmitoyl cysteine lipidation sites follow: C322 and C323. Positions 330–348 are interaction with SAG; it reads DDEASTTASKTETSQVAPA. Position 334 is a phosphoserine (S334). Phosphothreonine is present on residues T335 and T336. The residue at position 338 (S338) is a Phosphoserine. Phosphothreonine occurs at positions 340 and 342. Phosphoserine is present on S343.

The protein belongs to the G-protein coupled receptor 1 family. Opsin subfamily. Homodimer. May form a complex composed of RHO, GRK1 and RCVRN in a Ca(2+)-dependent manner; RCVRN prevents the interaction between GRK1 and RHO. Interacts with GRK1. Interacts (phosphorylated form) with SAG. Interacts with GNAT1. Interacts with GNAT3. SAG and G-proteins compete for a common binding site. Interacts with PRCD; the interaction promotes PRCD stability. Forms a complex with ASAP1 and ARF4. Forms a complex with ASAP1, RAB11A, Rabin8/RAB3IP, ARF4 and RAB11FIP3; the complex regulates Golgi-to-cilia rhodopsin/RHO transport in photoreceptors. In terms of processing, phosphorylated on some or all of the serine and threonine residues present in the C-terminal region. Post-translationally, contains one covalently linked retinal chromophore. Upon light absorption, the covalently bound 11-cis-retinal is converted to all-trans-retinal. After hydrolysis of the Schiff base and release of the covalently bound all-trans-retinal, active rhodopsin is regenerated by binding of a fresh molecule of 11-cis-retinal.

It localises to the membrane. The protein localises to the cell projection. Its subcellular location is the cilium. It is found in the photoreceptor outer segment. Photoreceptor required for image-forming vision at low light intensity. Required for photoreceptor cell viability after birth. Light-induced isomerization of 11-cis to all-trans retinal triggers a conformational change that activates signaling via G-proteins. Subsequent receptor phosphorylation mediates displacement of the bound G-protein alpha subunit by the arrestin SAG and terminates signaling. This chain is Rhodopsin (RHO), found in Otolemur crassicaudatus (Brown greater galago).